The following is a 469-amino-acid chain: Cell division protein FtsP (469 aa).

Positions 1 to 29 (MPRLSRRQLLKTAAISTALSTVPAPLLAA) form a signal peptide, tat-type signal. The 59-residue stretch at 228 to 286 (IRLRLLNASLARAYDLRLDNDQEMLLIAQDLSFLPKAKSVKSLVLSPGERAEILVNMNE) folds into the Plastocyanin-like domain.

Belongs to the FtsP family. Post-translationally, predicted to be exported by the Tat system. The position of the signal peptide cleavage has not been experimentally proven.

The protein localises to the periplasm. Functionally, cell division protein that is required for growth during stress conditions. May be involved in protecting or stabilizing the divisomal assembly under conditions of stress. In Haemophilus influenzae (strain 86-028NP), this protein is Cell division protein FtsP.